We begin with the raw amino-acid sequence, 380 residues long: D-threo-3-hydroxyaspartate dehydratase (380 aa).

Lys-43 carries the N6-(pyridoxal phosphate)lysine modification.

The protein belongs to the DSD1 family. As to quaternary structure, monomer. Pyridoxal 5'-phosphate is required as a cofactor. Requires Mn(2+) as cofactor. The cofactor is Co(2+). It depends on Ni(2+) as a cofactor.

It catalyses the reaction (3R)-3-hydroxy-D-aspartate = oxaloacetate + NH4(+). Strongly inhibited by hydroxylamine. Modestly inhibited by EDTA. Functionally, catalyzes the deamination of D-threo-3-hydroxyaspartate (D-THA). Also exhibits dehydratase activity towards L-threo-3-hydroxyaspartate (L-THA), L-erythro-3-hydroxyaspartate (L-EHA) and D-serine. In Delftia sp. (strain HT23), this protein is D-threo-3-hydroxyaspartate dehydratase (dthadh).